A 68-amino-acid chain; its full sequence is SERF-like protein YDL085C-A (68 aa).

Basic and acidic residues-rich tracts occupy residues Met1–Arg43 and Asp50–Arg68. The tract at residues Met1–Arg68 is disordered. A Phosphoserine modification is found at Ser37.

Belongs to the SERF family.

It localises to the cytoplasm. It is found in the nucleus. The sequence is that of SERF-like protein YDL085C-A from Saccharomyces cerevisiae (strain ATCC 204508 / S288c) (Baker's yeast).